Consider the following 160-residue polypeptide: Cytochrome b6-f complex subunit 4 (160 aa).

The next 3 helical transmembrane spans lie at 36–56 (LLYV…GLAV), 95–115 (LLGI…PFIE), and 131–151 (AVFL…TFPI).

Belongs to the cytochrome b family. PetD subfamily. The 4 large subunits of the cytochrome b6-f complex are cytochrome b6, subunit IV (17 kDa polypeptide, PetD), cytochrome f and the Rieske protein, while the 4 small subunits are PetG, PetL, PetM and PetN. The complex functions as a dimer.

The protein resides in the cellular thylakoid membrane. In terms of biological role, component of the cytochrome b6-f complex, which mediates electron transfer between photosystem II (PSII) and photosystem I (PSI), cyclic electron flow around PSI, and state transitions. The chain is Cytochrome b6-f complex subunit 4 from Crocosphaera subtropica (strain ATCC 51142 / BH68) (Cyanothece sp. (strain ATCC 51142)).